A 2053-amino-acid chain; its full sequence is Integrator complex subunit 1 (2053 aa).

Disordered stretches follow at residues K36–S58 and S249–P285. Positions D268 to S283 are enriched in polar residues. Residues L708–N728 traverse the membrane as a helical segment.

The protein belongs to the Integrator subunit 1 family. As to quaternary structure, belongs to the multiprotein complex Integrator, at least composed of IntS1, IntS2, IntS3, IntS4, omd/IntS5, IntS6, defl/IntS7, IntS8, IntS9, IntS10, IntS11, IntS12, asun/IntS13, IntS14 and IntS15. The core complex associates with protein phosphatase 2A subunits mts/PP2A and Pp2A-29B, to form the Integrator-PP2A (INTAC) complex. Within the complex, interacts with IntS12 and IntS9. Interaction with IntS12 is likely to be important for promoting 3'-end processing of snRNAs. Interacts with Mediator complex members Cdk8 and CycC.

Its subcellular location is the nucleus membrane. It is found in the nucleus. Functionally, component of the integrator complex, a multiprotein complex that terminates RNA polymerase II (Pol II) transcription in the promoter-proximal region of genes. The integrator complex provides a quality checkpoint during transcription elongation by driving premature transcription termination of transcripts that are unfavorably configured for transcriptional elongation: the complex terminates transcription by (1) catalyzing dephosphorylation of the C-terminal domain (CTD) of Pol II subunit Polr2A/Rbp1 and Spt5, and (2) degrading the exiting nascent RNA transcript via endonuclease activity. The integrator complex is also involved in the 3'-end processing of the U7 snRNA, and also the spliceosomal snRNAs U1, U2, U4 and U5. Required for the normal expression of the Integrator complex component IntS12. This is Integrator complex subunit 1 from Drosophila melanogaster (Fruit fly).